The primary structure comprises 332 residues: Biotin synthase (332 aa).

A Radical SAM core domain is found at 53–282; sequence HFGKKVKLNM…TKEIRISGGR (230 aa). Positions 71, 75, and 78 each coordinate [4Fe-4S] cluster. [2Fe-2S] cluster contacts are provided by cysteine 115, cysteine 147, cysteine 207, and arginine 277.

This sequence belongs to the radical SAM superfamily. Biotin synthase family. Homodimer. It depends on [4Fe-4S] cluster as a cofactor. Requires [2Fe-2S] cluster as cofactor.

It catalyses the reaction (4R,5S)-dethiobiotin + (sulfur carrier)-SH + 2 reduced [2Fe-2S]-[ferredoxin] + 2 S-adenosyl-L-methionine = (sulfur carrier)-H + biotin + 2 5'-deoxyadenosine + 2 L-methionine + 2 oxidized [2Fe-2S]-[ferredoxin]. It functions in the pathway cofactor biosynthesis; biotin biosynthesis; biotin from 7,8-diaminononanoate: step 2/2. Catalyzes the conversion of dethiobiotin (DTB) to biotin by the insertion of a sulfur atom into dethiobiotin via a radical-based mechanism. In Bacillus cereus (strain G9842), this protein is Biotin synthase.